Consider the following 101-residue polypeptide: Chaperone modulatory protein CbpM (101 aa).

This sequence belongs to the CbpM family.

Interacts with CbpA and inhibits both the DnaJ-like co-chaperone activity and the DNA binding activity of CbpA. Together with CbpA, modulates the activity of the DnaK chaperone system. Does not inhibit the co-chaperone activity of DnaJ. The protein is Chaperone modulatory protein CbpM of Salmonella paratyphi A (strain ATCC 9150 / SARB42).